Here is a 274-residue protein sequence, read N- to C-terminus: Putative outer membrane protein CPn_1073/CP_0776/CPj1073/CpB1118 (274 aa).

Residues 1–21 form the signal peptide; that stretch reads MRRYLFMVLALCLYRAAPLEA.

It is found in the cell outer membrane. This is Putative outer membrane protein CPn_1073/CP_0776/CPj1073/CpB1118 from Chlamydia pneumoniae (Chlamydophila pneumoniae).